The sequence spans 553 residues: Solute carrier family 22 member 12 (553 aa).

The helical transmembrane segment at 16-36 (FQLLQAVALVTPILWVTTQNM) threads the bilayer. N-linked (GlcNAc...) asparagine glycans are attached at residues N56, N102, and N107. A run of 11 helical transmembrane segments spans residues 146–166 (PMAQ…CGHA), 182–202 (LVSV…YCLF), 204–224 (FLVA…LMEW), 232–252 (LMMT…GSVA), 260–280 (MLQL…WWLP), 351–371 (FISM…ALDL), 378–398 (IFLL…GSLL), 407–427 (LCQA…ILVP), 435–455 (SSLA…VTIF), 466–486 (MTAV…GPLV), and 495–515 (WLPL…ALLL). S534 bears the Phosphoserine mark.

This sequence belongs to the major facilitator (TC 2.A.1) superfamily. Organic cation transporter (TC 2.A.1.19) family. As to quaternary structure, interacts with PDZK1. Post-translationally, N-glycosylated. As to expression, expressed in the proximal tubular epithelial cells in kidney.

The protein localises to the apical cell membrane. It catalyses the reaction urate(out) + (S)-lactate(in) = urate(in) + (S)-lactate(out). The catalysed reaction is nicotinate(in) + urate(out) = nicotinate(out) + urate(in). The enzyme catalyses urate(out) + n chloride(in) = urate(in) + n chloride(out). It carries out the reaction orotate(out) + nicotinate(in) = orotate(in) + nicotinate(out). Its function is as follows. Electroneutral antiporter that translocates urate across the apical membrane of proximal tubular cells in exchange for monovalent organic or inorganic anions. Involved in renal reabsorption of urate and helps maintaining blood levels of uric acid. Mediates urate uptake by an exchange with organic anions such as (S)-lactate and nicotinate, and inorganic anion Cl(-). Other inorganic anions such as Br(-), I(-) and NO3(-) may also act as counteranions that exchange for urate. Also mediates orotate tubular uptake coupled with nicotinate efflux and to a lesser extent with lactate efflux, therefore displaying a potential role in orotate renal reabsorption. Orotate transport is Cl(-)-dependent. This Rattus norvegicus (Rat) protein is Solute carrier family 22 member 12 (Slc22a12).